Consider the following 193-residue polypeptide: MTFQPTKTWLVFDDNALINKPTEAVNFPIDEQIETCIKKMIAYVDASYDGKAQEYDIIPGIGIAANQIGYWKQLFYIHLNDLNKEKKCLLINPKIIDQSENKAFLESGEGCLSVKKQHKGYVIRSEWITIKGYDWFEKKEITIKATGLFGMCLQHEFDHLQGRFFYQRINPLNPWFKKPEWKVINPTLKTSNG.

Residues cysteine 111 and histidine 155 each coordinate Fe cation. Glutamate 156 is an active-site residue. Histidine 159 contacts Fe cation.

The protein belongs to the polypeptide deformylase family. It depends on Fe(2+) as a cofactor.

The catalysed reaction is N-terminal N-formyl-L-methionyl-[peptide] + H2O = N-terminal L-methionyl-[peptide] + formate. Functionally, removes the formyl group from the N-terminal Met of newly synthesized proteins. Requires at least a dipeptide for an efficient rate of reaction. N-terminal L-methionine is a prerequisite for activity but the enzyme has broad specificity at other positions. This chain is Peptide deformylase, found in Mycoplasma genitalium (strain ATCC 33530 / DSM 19775 / NCTC 10195 / G37) (Mycoplasmoides genitalium).